The primary structure comprises 396 residues: Elongation factor Tu (396 aa).

The 196-residue stretch at 10 to 205 (KPHVNIGTIG…AVDESIPDPV (196 aa)) folds into the tr-type G domain. Positions 19-26 (GHVDHGKT) are G1. 19-26 (GHVDHGKT) serves as a coordination point for GTP. A Mg(2+)-binding site is contributed by Thr-26. The tract at residues 62–66 (GITIN) is G2. Positions 83 to 86 (DAPG) are G3. GTP contacts are provided by residues 83–87 (DAPGH) and 138–141 (NKAD). Positions 138-141 (NKAD) are G4. Residues 175-177 (SGL) are G5.

The protein belongs to the TRAFAC class translation factor GTPase superfamily. Classic translation factor GTPase family. EF-Tu/EF-1A subfamily. In terms of assembly, monomer.

The protein resides in the cytoplasm. The catalysed reaction is GTP + H2O = GDP + phosphate + H(+). GTP hydrolase that promotes the GTP-dependent binding of aminoacyl-tRNA to the A-site of ribosomes during protein biosynthesis. This Nocardia farcinica (strain IFM 10152) protein is Elongation factor Tu.